The chain runs to 550 residues: Hydroxylamine reductase (550 aa).

Residues C3, C6, C18, and C25 each coordinate [2Fe-2S] cluster. Residues H249, E273, C317, C405, C433, C458, E492, and K494 each contribute to the hybrid [4Fe-2O-2S] cluster site. The residue at position 405 (C405) is a Cysteine persulfide.

It belongs to the HCP family. [2Fe-2S] cluster serves as cofactor. Requires hybrid [4Fe-2O-2S] cluster as cofactor.

The protein localises to the cytoplasm. The catalysed reaction is A + NH4(+) + H2O = hydroxylamine + AH2 + H(+). Functionally, catalyzes the reduction of hydroxylamine to form NH(3) and H(2)O. The sequence is that of Hydroxylamine reductase from Salmonella typhimurium (strain LT2 / SGSC1412 / ATCC 700720).